The following is a 949-amino-acid chain: MDKTYSPAAIEQDLYQQWEDKGYFKPSGKGDPYSIMIPPPNVTGSLHMGHAFQHTIMDTLTRYQRMDGLNTLWQVGSDHAGIATQMVVERQLAAQGQTRQELGRDAFIDKIWEWKEQSGGTITQQMRRLGDSVDWDRERFTMDEGLSDAVREVFVKLHEDNLIYRGKRLVNWDPALQTAISDLEVENKEQQGYIWYLRYPLADGEKTEDGKDHLVVATTRPETMLGDVCVAVHPDDERFAHLVGKFLELPIVNRRIPIVADHHVDSEFGTGCVKVTPAHDFNDYEIGKRHQTGMISIFDDTAHVMAKAGLYTSTGETLEELNGFNGILPEQYAGKERFEARKQLVAEFDELGLLEKIEKHTNKIPYGDRGGVPIEPHLTDQWYVRVEPMAKQATAAVEDGRIEFVPKQYENMYFSWMRDIQDWCISRQLWWGHRIPAWYDEQGNVYVGRTEEEVREKHNLGDTPLQQDEDVLDTWFSSALWTFSTLGWPKNTEDLKTFHPTDVLVTGFDIIFFWVARMIMMTMHFMKDEEGQPQVPFKKVYVTGLIRDEEGQKMSKSKGNVLDPLDMIDGISADELVAKRTANLMQPKMREKIEKRTRKEFPEGITAHGTDALRFTLTALASTGRDINWDMKRLEGYRNFCNKLWNASRYVLMSTEEHDCGLENDDMTLSLADEWIIARFNSTVKDFRQALDTYRFDQAAAIAYEFTWNQFCDWYLELTKPVLQNGTESQQRGTRHTLVNVLEQLLRLLHPVMPYITETIWQRVKPLVGNTDDTIMLQPFPRVEDNVSHQAMQDMEWLKRVILAIRNIRGEMDLSPNKPLPLLLSNADAMAKGRIQNNESFLSSLAKLESIEFIESDDDAPASMTALVDTLKLHIPMAGLIDKEAELQRLQKSIEKANKEWQRLNGKLSNDNFVSKAPEAVIAKEREKLSEAETTLKQLQEQQDKIKAL.

The 'HIGH' region motif lies at 40–50; sequence PNVTGSLHMGH. The 'KMSKS' region motif lies at 553 to 557; sequence KMSKS. Residue Lys-556 coordinates ATP. The stretch at 877 to 949 forms a coiled coil; the sequence is MAGLIDKEAE…QEQQDKIKAL (73 aa).

This sequence belongs to the class-I aminoacyl-tRNA synthetase family. ValS type 1 subfamily. As to quaternary structure, monomer.

The protein resides in the cytoplasm. It carries out the reaction tRNA(Val) + L-valine + ATP = L-valyl-tRNA(Val) + AMP + diphosphate. In terms of biological role, catalyzes the attachment of valine to tRNA(Val). As ValRS can inadvertently accommodate and process structurally similar amino acids such as threonine, to avoid such errors, it has a 'posttransfer' editing activity that hydrolyzes mischarged Thr-tRNA(Val) in a tRNA-dependent manner. The chain is Valine--tRNA ligase from Idiomarina loihiensis (strain ATCC BAA-735 / DSM 15497 / L2-TR).